The sequence spans 228 residues: Heptaprenylglyceryl phosphate synthase (228 aa).

Lys-12 is a sn-glycerol 1-phosphate binding site. Residues Asp-14 and Ser-40 each contribute to the Mg(2+) site. Sn-glycerol 1-phosphate is bound by residues 158-163, Gly-188, and 208-209; these read YLEYSG and GN.

This sequence belongs to the GGGP/HepGP synthase family. Group I subfamily. In terms of assembly, homodimer. Mg(2+) is required as a cofactor.

It carries out the reaction sn-glycerol 1-phosphate + all-trans-heptaprenyl diphosphate = 3-heptaprenyl-sn-glycero-1-phosphate + diphosphate. It functions in the pathway membrane lipid metabolism; glycerophospholipid metabolism. In terms of biological role, prenyltransferase that catalyzes in vivo the transfer of the heptaprenyl moiety of heptaprenyl pyrophosphate (HepPP; 35 carbon atoms) to the C3 hydroxyl of sn-glycerol-1-phosphate (G1P), producing heptaprenylglyceryl phosphate (HepGP). This reaction is an ether-bond-formation step in the biosynthesis of archaea-type G1P-based membrane lipids found in Bacillales. To a much lesser extent, is also able to use geranyl diphosphate (GPP; C10) and geranylgeranyl diphosphate (GGPP; C20) as the prenyl donors, but not farnesyl pyrophosphate (FPP; C15). Cannot use glycerol-3-phosphate (G3P) or 3-phosphoglycerate (3PG) as an acceptor. The sequence is that of Heptaprenylglyceryl phosphate synthase from Bacillus subtilis (strain 168).